The sequence spans 183 residues: Dual-action ribosomal maturation protein DarP (183 aa).

This sequence belongs to the DarP family.

Its subcellular location is the cytoplasm. Its function is as follows. Member of a network of 50S ribosomal subunit biogenesis factors which assembles along the 30S-50S interface, preventing incorrect 23S rRNA structures from forming. Promotes peptidyl transferase center (PTC) maturation. The protein is Dual-action ribosomal maturation protein DarP of Escherichia coli O6:H1 (strain CFT073 / ATCC 700928 / UPEC).